The following is a 261-amino-acid chain: 5'-nucleotidase SurE (261 aa).

4 residues coordinate a divalent metal cation: aspartate 8, aspartate 9, serine 39, and asparagine 91.

This sequence belongs to the SurE nucleotidase family. The cofactor is a divalent metal cation.

The protein localises to the cytoplasm. The enzyme catalyses a ribonucleoside 5'-phosphate + H2O = a ribonucleoside + phosphate. Nucleotidase that shows phosphatase activity on nucleoside 5'-monophosphates. This is 5'-nucleotidase SurE from Polaromonas sp. (strain JS666 / ATCC BAA-500).